The primary structure comprises 132 residues: MRAEGADHSMINLSVQQVLSLWAHGTVLRNLTEMWYWIFLWALFSSLFVHGAAGVLMFVMLQRHRQGRVLSIIAVSIGFLASVTGAMITSAAVAGIYRVAGKNMAPLEALVWGVGQTVLTLIISFSRILATL.

The Extracellular segment spans residues 1–37 (MRAEGADHSMINLSVQQVLSLWAHGTVLRNLTEMWYW). A glycan (N-linked (GlcNAc...) asparagine) is linked at Asn-12. A helical transmembrane segment spans residues 38–58 (IFLWALFSSLFVHGAAGVLMF). Residues 59–68 (VMLQRHRQGR) are Cytoplasmic-facing. Residues 69–89 (VLSIIAVSIGFLASVTGAMIT) form a helical membrane-spanning segment. The Extracellular portion of the chain corresponds to 90–104 (SAAVAGIYRVAGKNM). The helical transmembrane segment at 105–125 (APLEALVWGVGQTVLTLIISF) threads the bilayer. The Cytoplasmic portion of the chain corresponds to 126 to 132 (SRILATL).

Belongs to the TMEM170 family. Interacts with CTNNB1.

The protein localises to the cell membrane. The chain is Transmembrane protein 170B (Tmem170b) from Rattus norvegicus (Rat).